The following is a 231-amino-acid chain: DNA repair protein RecO (231 aa).

Belongs to the RecO family.

Involved in DNA repair and RecF pathway recombination. The polypeptide is DNA repair protein RecO (Coxiella burnetii (strain CbuK_Q154) (Coxiella burnetii (strain Q154))).